Reading from the N-terminus, the 226-residue chain is Ribosomal RNA small subunit methyltransferase Nep1 (226 aa).

Residues glycine 176, glycine 181, and 197–202 each bind S-adenosyl-L-methionine; that span reads IYEESL.

The protein belongs to the class IV-like SAM-binding methyltransferase superfamily. RNA methyltransferase NEP1 family. Homodimer.

The catalysed reaction is a pseudouridine in rRNA + S-adenosyl-L-methionine = an N(1)-methylpseudouridine in rRNA + S-adenosyl-L-homocysteine + H(+). Its function is as follows. Methyltransferase involved in ribosomal biogenesis. Specifically catalyzes the N1-methylation of the pseudouridine corresponding to position 914 in M.jannaschii 16S rRNA. This Methanothrix thermoacetophila (strain DSM 6194 / JCM 14653 / NBRC 101360 / PT) (Methanosaeta thermophila) protein is Ribosomal RNA small subunit methyltransferase Nep1.